The sequence spans 240 residues: Dephospho-CoA kinase domain-containing protein (240 aa).

One can recognise a DPCK domain in the interval 3-207 (LVGLTGGIAS…RSMEYLPLRL (205 aa)). 8–15 (GGIASGKS) contacts ATP.

Belongs to the CoaE family.

The polypeptide is Dephospho-CoA kinase domain-containing protein (Dcakd) (Rattus norvegicus (Rat)).